Here is a 218-residue protein sequence, read N- to C-terminus: Elongation factor Ts (218 aa).

The tract at residues 82–85 is involved in Mg(2+) ion dislocation from EF-Tu; that stretch reads TDFV.

It belongs to the EF-Ts family.

It localises to the cytoplasm. Associates with the EF-Tu.GDP complex and induces the exchange of GDP to GTP. It remains bound to the aminoacyl-tRNA.EF-Tu.GTP complex up to the GTP hydrolysis stage on the ribosome. The protein is Elongation factor Ts of Prochlorococcus marinus (strain MIT 9301).